Consider the following 339-residue polypeptide: Anthranilate phosphoribosyltransferase (339 aa).

5-phospho-alpha-D-ribose 1-diphosphate contacts are provided by residues Gly81, Gly84–Asp85, Ser89, Asn91–Thr94, Lys109–Ser117, and Ala121. Anthranilate is bound at residue Gly81. Ser93 provides a ligand contact to Mg(2+). Asn112 contacts anthranilate. Residue Arg167 coordinates anthranilate. Positions 226 and 227 each coordinate Mg(2+).

Belongs to the anthranilate phosphoribosyltransferase family. As to quaternary structure, homodimer. The cofactor is Mg(2+).

It catalyses the reaction N-(5-phospho-beta-D-ribosyl)anthranilate + diphosphate = 5-phospho-alpha-D-ribose 1-diphosphate + anthranilate. The protein operates within amino-acid biosynthesis; L-tryptophan biosynthesis; L-tryptophan from chorismate: step 2/5. Functionally, catalyzes the transfer of the phosphoribosyl group of 5-phosphorylribose-1-pyrophosphate (PRPP) to anthranilate to yield N-(5'-phosphoribosyl)-anthranilate (PRA). The sequence is that of Anthranilate phosphoribosyltransferase from Rhodopseudomonas palustris (strain BisB18).